A 452-amino-acid polypeptide reads, in one-letter code: Gamma conglutin 1 (452 aa).

The N-terminal stretch at 1–33 (MAKNMAPILHILVISLSYSFLFVTSSSQNSQSL) is a signal peptide. Residues 61–432 (HWGNILKRTP…DLARSRVGFN (372 aa)) enclose the Peptidase A1 domain. Intrachain disulfides connect C89-C179, C103-C116, C108-C134, C119-C129, and C353-C394. A glycan (N-linked (GlcNAc...) asparagine) is linked at N131.

This sequence belongs to the peptidase A1 family. Two-subunit monomeric unit made of alpha and beta subunits coupled by disulfide bonds (at pH 4.5 and under non-reducing conditions). Monomeric alpha and beta subunits in reducing conditions. Can also form oligomers including dimer, tetramer and cyclic hexamer (trimer of dimers) (at pH &gt; 5.5). Component of globulins complexes which accumulate in seeds. Interacts with flavonoids (e.g. apigenin glucosides) present in globulins complexes. In terms of processing, glycosylated on alpha chain at Asn-131; identified N-glycans bound are Man(2)(Xyl)(Fuc)GlcNAc(2), Man(3)(Xyl)(Fuc)GlcNAc(2), GlcNAcMan(3)(Xyl)(Fuc)GlcNAc(2) and GlcNAc(2)Man(3)(Xyl)(Fuc)GlcNAc(2). In terms of tissue distribution, expressed in developing seeds and in the young roots and cotyledons of germinating seeds and young seedlings.

It is found in the secreted. The protein localises to the extracellular space. In terms of biological role, sulfur-rich seed storage protein that remains undegraded at germination. The uncleaved form exhibits some inhibitory activity against GH11 xylanase from T.longibrachiatum, more at pH 7 than at pH 5.3, but not against GH12 xyloglucan-specific endoglucanase (XEG) from A.aculeatus. Binds to model phospholipid membranes containing dimyristoyl phosphatidylglycerol (DMPG), dioleoyl phosphatidic acid (DOPA) or mixture of dimyristoyl phosphatidylcholine and dimyristoyl phosphatidylglycerol (DMPC:DMPG), or mixture of dioleoyl phosphatidic acid and dioleoyl phosphatidylcholine (DOPC:DOPA). This is Gamma conglutin 1 from Lupinus albus (White lupine).